An 823-amino-acid polypeptide reads, in one-letter code: DNA mismatch repair protein MutS (823 aa).

Position 605-612 (605-612) interacts with ATP; sequence GPNMSGKS.

The protein belongs to the DNA mismatch repair MutS family.

This protein is involved in the repair of mismatches in DNA. It is possible that it carries out the mismatch recognition step. This protein has a weak ATPase activity. The polypeptide is DNA mismatch repair protein MutS (Fervidobacterium nodosum (strain ATCC 35602 / DSM 5306 / Rt17-B1)).